A 222-amino-acid chain; its full sequence is Ribosome maturation factor RimM (222 aa).

The disordered stretch occupies residues 1–22 (MTERKQGAARPLNRPLVQPQGE). Positions 145 to 222 (EDEFYWVDLI…RIVVDWGLDY (78 aa)) constitute a PRC barrel domain.

It belongs to the RimM family. As to quaternary structure, binds ribosomal protein uS19.

It is found in the cytoplasm. Its function is as follows. An accessory protein needed during the final step in the assembly of 30S ribosomal subunit, possibly for assembly of the head region. Essential for efficient processing of 16S rRNA. May be needed both before and after RbfA during the maturation of 16S rRNA. It has affinity for free ribosomal 30S subunits but not for 70S ribosomes. This Cupriavidus necator (strain ATCC 17699 / DSM 428 / KCTC 22496 / NCIMB 10442 / H16 / Stanier 337) (Ralstonia eutropha) protein is Ribosome maturation factor RimM.